A 582-amino-acid chain; its full sequence is 15-cis-phytoene desaturase, chloroplastic/chromoplastic (582 aa).

The transit peptide at 1–110 (MPQIGLVSAV…FRSSPRPTKP (110 aa)) directs the protein to the chloroplast and chromoplast. FAD is bound by residues 140-141 (EA), Lys148, 165-166 (HI), and Tyr171. Arg306 contacts substrate. Positions 348 and 537 each coordinate FAD. A substrate-binding site is contributed by Ala545. Met547 is a binding site for FAD.

This sequence belongs to the carotenoid/retinoid oxidoreductase family. Homotetramer. Requires FAD as cofactor.

The protein resides in the plastid. Its subcellular location is the chloroplast. The protein localises to the chromoplast. It localises to the membrane. It carries out the reaction 2 a plastoquinone + 15-cis-phytoene = 9,9',15-tri-cis-zeta-carotene + 2 a plastoquinol. Its pathway is carotenoid biosynthesis; lycopene biosynthesis. Inhibited by the herbicides metflurazon, difunone, fluridone and diflufenican. Its function is as follows. Converts phytoene into zeta-carotene via the intermediary of phytofluene by the symmetrical introduction of two double bonds at the C-11 and C-11' positions of phytoene with a concomitant isomerization of two neighboring double bonds at the C9 and C9' positions from trans to cis. This is 15-cis-phytoene desaturase, chloroplastic/chromoplastic (PDS) from Capsicum annuum (Capsicum pepper).